Here is a 73-residue protein sequence, read N- to C-terminus: Defensin-like protein 87 (73 aa).

An N-terminal signal peptide occupies residues 1 to 27 (MTTKKTSSVVLPLLLVFALILMPMVAG). 3 disulfides stabilise this stretch: Cys33/Cys71, Cys45/Cys69, and Cys49/Cys70.

This sequence belongs to the DEFL family.

The protein localises to the secreted. The sequence is that of Defensin-like protein 87 from Arabidopsis thaliana (Mouse-ear cress).